The following is a 270-amino-acid chain: Phosphonates import ATP-binding protein PhnC 1 (270 aa).

The region spanning 2 to 245 is the ABC transporter domain; that stretch reads LVVEGLTCRF…IARELYDLEA (244 aa). Residue 34 to 41 coordinates ATP; the sequence is GRSGAGKS.

This sequence belongs to the ABC transporter superfamily. Phosphonates importer (TC 3.A.1.9.1) family. In terms of assembly, the complex is composed of two ATP-binding proteins (PhnC), two transmembrane proteins (PhnE) and a solute-binding protein (PhnD).

The protein resides in the cell inner membrane. It catalyses the reaction phosphonate(out) + ATP + H2O = phosphonate(in) + ADP + phosphate + H(+). In terms of biological role, part of the ABC transporter complex PhnCDE involved in phosphonates import. Responsible for energy coupling to the transport system. The protein is Phosphonates import ATP-binding protein PhnC 1 of Rhodopseudomonas palustris (strain ATCC BAA-98 / CGA009).